The sequence spans 316 residues: Apolipoprotein E (316 aa).

Positions 1–18 (MKVLWVALVVALLAGCQA) are cleaved as a signal peptide. 8 tandem repeats follow at residues 79 to 100 (VLMEETMKEVKAYREELEGQLA), 101 to 122 (PMAQETQARVSKELQAAQARLG), 123 to 144 (SDMEDLRNRLAQYRSEVQAMLG), 145 to 166 (QSTEELRARMASHLRKLRKRLL), 167 to 188 (RDADDLKKRLAVYQAGASEGAE), 189 to 210 (RSVSAIRERLRPLVEQSQSRAA), 211 to 232 (TLSTQVGQPLLDRAEAWRQKLH), and 233 to 254 (GRLEEVGVRAQDRLDKMRQQLE). Positions 79–254 (VLMEETMKEV…RLDKMRQQLE (176 aa)) are 8 X 22 AA approximate tandem repeats. Met-142 carries the methionine sulfoxide modification. Ser-146 bears the Phosphoserine mark. The tract at residues 157-167 (HLRKLRKRLLR) is LDL and other lipoprotein receptors binding. A heparin-binding site is contributed by 161–164 (LRKR). Residues 209 to 289 (AATLSTQVGQ…SWFEPLVEDM (81 aa)) are lipid-binding and lipoprotein association. A heparin-binding site is contributed by 228 to 235 (RQKLHGRL). A homooligomerization region spans residues 265-316 (SQIRLQAEAFQARLRSWFEPLVEDMQRQWAGLVEKVQLALHLSPTSPPSENH). The specificity for association with VLDL stretch occupies residues 277–289 (RLRSWFEPLVEDM).

It belongs to the apolipoprotein A1/A4/E family. In terms of assembly, homotetramer. May interact with ABCA1; functionally associated with ABCA1 in the biogenesis of HDLs. May interact with APP/A4 amyloid-beta peptide; the interaction is extremely stable in vitro but its physiological significance is unclear. May interact with MAPT. May interact with MAP2. In the cerebrospinal fluid, interacts with secreted SORL1. Interacts with PMEL; this allows the loading of PMEL luminal fragment on ILVs to induce fibril nucleation. APOE exists as multiple glycosylated and sialylated glycoforms within cells and in plasma. The extent of glycosylation and sialylation are tissue and context specific. In terms of processing, glycated in plasma VLDL. Post-translationally, phosphorylated by FAM20C in the extracellular medium.

It is found in the secreted. The protein localises to the extracellular space. Its subcellular location is the extracellular matrix. The protein resides in the extracellular vesicle. It localises to the endosome. It is found in the multivesicular body. In terms of biological role, APOE is an apolipoprotein, a protein associating with lipid particles, that mainly functions in lipoprotein-mediated lipid transport between organs via the plasma and interstitial fluids. APOE is a core component of plasma lipoproteins and is involved in their production, conversion and clearance. Apolipoproteins are amphipathic molecules that interact both with lipids of the lipoprotein particle core and the aqueous environment of the plasma. As such, APOE associates with chylomicrons, chylomicron remnants, very low density lipoproteins (VLDL) and intermediate density lipoproteins (IDL) but shows a preferential binding to high-density lipoproteins (HDL). It also binds a wide range of cellular receptors including the LDL receptor/LDLR and the very low-density lipoprotein receptor/VLDLR that mediate the cellular uptake of the APOE-containing lipoprotein particles. Finally, APOE also has a heparin-binding activity and binds heparan-sulfate proteoglycans on the surface of cells, a property that supports the capture and the receptor-mediated uptake of APOE-containing lipoproteins by cells. The protein is Apolipoprotein E (APOE) of Ovis aries (Sheep).